A 332-amino-acid chain; its full sequence is tRNA dimethylallyltransferase (332 aa).

An ATP-binding site is contributed by 14–21 (GPTASGKT). Residue 16–21 (TASGKT) participates in substrate binding. The interval 39–42 (DSMQ) is interaction with substrate tRNA. Residues 313 to 332 (KRSSKHDCKPQHPRSSTREL) are disordered. The segment covering 317-332 (KHDCKPQHPRSSTREL) has biased composition (basic and acidic residues).

Belongs to the IPP transferase family. In terms of assembly, monomer. Mg(2+) is required as a cofactor.

The catalysed reaction is adenosine(37) in tRNA + dimethylallyl diphosphate = N(6)-dimethylallyladenosine(37) in tRNA + diphosphate. In terms of biological role, catalyzes the transfer of a dimethylallyl group onto the adenine at position 37 in tRNAs that read codons beginning with uridine, leading to the formation of N6-(dimethylallyl)adenosine (i(6)A). In Staphylococcus haemolyticus (strain JCSC1435), this protein is tRNA dimethylallyltransferase.